The chain runs to 363 residues: UDP-3-O-acylglucosamine N-acyltransferase (363 aa).

Residue His266 is the Proton acceptor of the active site.

Belongs to the transferase hexapeptide repeat family. LpxD subfamily. As to quaternary structure, homotrimer.

The catalysed reaction is a UDP-3-O-[(3R)-3-hydroxyacyl]-alpha-D-glucosamine + a (3R)-hydroxyacyl-[ACP] = a UDP-2-N,3-O-bis[(3R)-3-hydroxyacyl]-alpha-D-glucosamine + holo-[ACP] + H(+). It functions in the pathway bacterial outer membrane biogenesis; LPS lipid A biosynthesis. Its function is as follows. Catalyzes the N-acylation of UDP-3-O-acylglucosamine using 3-hydroxyacyl-ACP as the acyl donor. Is involved in the biosynthesis of lipid A, a phosphorylated glycolipid that anchors the lipopolysaccharide to the outer membrane of the cell. The polypeptide is UDP-3-O-acylglucosamine N-acyltransferase (Bordetella pertussis (strain Tohama I / ATCC BAA-589 / NCTC 13251)).